Reading from the N-terminus, the 64-residue chain is Large ribosomal subunit protein bL35 (64 aa).

It belongs to the bacterial ribosomal protein bL35 family.

This Levilactobacillus brevis (strain ATCC 367 / BCRC 12310 / CIP 105137 / JCM 1170 / LMG 11437 / NCIMB 947 / NCTC 947) (Lactobacillus brevis) protein is Large ribosomal subunit protein bL35.